The following is a 235-amino-acid chain: Probable inactive serine protease 37 (235 aa).

The first 19 residues, 1-19, serve as a signal peptide directing secretion; the sequence is MKFIFYLSVLTGTFLFADS. The 214-residue stretch at 20-233 folds into the Peptidase S1 domain; it reads SVQKEDPAPY…YVSWIENTAK (214 aa). Disulfide bonds link cysteine 40–cysteine 56, cysteine 131–cysteine 198, and cysteine 163–cysteine 177.

It belongs to the peptidase S1 family.

The protein resides in the cytoplasmic vesicle. It localises to the secretory vesicle. It is found in the acrosome. The protein localises to the secreted. In terms of biological role, plays a role in male fertility. May have a role in sperm migration or binding to zona-intact eggs. Involved in the activation of the proacrosin/acrosin system. This chain is Probable inactive serine protease 37, found in Macaca fascicularis (Crab-eating macaque).